A 336-amino-acid polypeptide reads, in one-letter code: Adenylosuccinate synthetase (336 aa).

GTP-binding positions include 12–18 (GDEGKGK) and 42–44 (GHS). The Proton acceptor role is filled by aspartate 13. Mg(2+) is bound by residues aspartate 13 and glycine 42. IMP contacts are provided by residues 13–16 (DEGK), 40–43 (NAGH), threonine 127, arginine 141, glutamine 179, threonine 194, and arginine 256. Histidine 43 serves as the catalytic Proton donor. 252 to 258 (TVTGRRR) is a binding site for substrate. GTP contacts are provided by residues arginine 258, 284 to 286 (CLD), and 324 to 326 (STG).

It belongs to the adenylosuccinate synthetase family. Homodimer. The cofactor is Mg(2+).

The protein resides in the cytoplasm. The enzyme catalyses IMP + L-aspartate + GTP = N(6)-(1,2-dicarboxyethyl)-AMP + GDP + phosphate + 2 H(+). The protein operates within purine metabolism; AMP biosynthesis via de novo pathway; AMP from IMP: step 1/2. Plays an important role in the de novo pathway of purine nucleotide biosynthesis. Catalyzes the first committed step in the biosynthesis of AMP from IMP. The sequence is that of Adenylosuccinate synthetase from Methanococcus aeolicus (strain ATCC BAA-1280 / DSM 17508 / OCM 812 / Nankai-3).